Consider the following 672-residue polypeptide: Negative growth regulatory protein NGR1 (672 aa).

Methionine 1 bears the N-acetylmethionine mark. 2 stretches are compositionally biased toward polar residues: residues 1-13 (MMSN…QRQE) and 23-32 (SSTVETSTEP). Disordered stretches follow at residues 1-40 (MMSN…WMGD) and 77-102 (SSTS…NSTD). N-acetylserine is present on methionine 2. 3 RRM domains span residues 36–159 (LWMG…YSPT), 192–271 (FSLF…YATP), and 360–432 (TTVF…WGRP). Positions 77 to 96 (SSTSSSNNNTSEENAENQQS) are enriched in low complexity. Serine 524 carries the post-translational modification Phosphoserine. The tract at residues 640–672 (LNIAPNSNNSKSSIMNKHPNRNNVPPIHPSLLH) is disordered. Residues 645–656 (NSNNSKSSIMNK) show a composition bias toward low complexity.

Functionally, may be an RNA-binding protein involved in control of an RNA processing pathway that influences the regulation of cell growth in early log phase. Can bind to RNA and single-stranded DNA but not double-stranded DNA. This chain is Negative growth regulatory protein NGR1 (NGR1), found in Saccharomyces cerevisiae (strain ATCC 204508 / S288c) (Baker's yeast).